The primary structure comprises 269 residues: MVKQTDQGQGASPTKQPLKKLAEVRDLNFYYGGNKALKNINLPVYEKQVTALIGPSGCGKTTLLRCFNRMHDLYPGNRYEGEIWLGDENPRNLLQMDPIEVRMQIGMVFQKPNPFPKSIYENVAYGLRIRGITNRAVLDEVVERSLRNAALWDEVKDRLKDPGTSLSGGQQQRLCIARALATNPELILFDEPTSALDPIATVSIENLITELKDQVTILIVTHSMQQAIRISQFTAFMYLGELVEYNDTMSIFTKPVQQKTADYVNGRFG.

One can recognise an ABC transporter domain in the interval 22-264 (AEVRDLNFYY…PVQQKTADYV (243 aa)). ATP is bound at residue 54 to 61 (GPSGCGKT).

Belongs to the ABC transporter superfamily. Phosphate importer (TC 3.A.1.7) family. As to quaternary structure, the complex is composed of two ATP-binding proteins (PstB), two transmembrane proteins (PstC and PstA) and a solute-binding protein (PstS).

It is found in the cell inner membrane. The enzyme catalyses phosphate(out) + ATP + H2O = ADP + 2 phosphate(in) + H(+). Functionally, part of the ABC transporter complex PstSACB involved in phosphate import. Responsible for energy coupling to the transport system. This is Phosphate import ATP-binding protein PstB from Thermosynechococcus vestitus (strain NIES-2133 / IAM M-273 / BP-1).